We begin with the raw amino-acid sequence, 388 residues long: MHLHEYQAKDLLVSYDIAIPPYRVASSVEEGQQALKELAIDAGVVKVQVHAGGRGKNGGVVVAKSPSDILAAVDKLLRMRFVSNQTSGEALPVEKVLITPLVNIAAEYYLAVIMDRKNRCPAIMLSKAGGVDIEEVAQKYPDQLLTVPLTPFARLYNYQIRQIIKFMNWEGDIRKQGAQLIKKLVQCFYDNDASLLEINPLVLTQEGDLLVLDAKITIDDNALYRHPKLEVLYDPSQENVRDVLAKQIGLSYIALDGNIGCLVNGAGLAMSTLDILKIHGGSAANFLDVGGSATEQQVQEAVSLVLSDENVEVLFINIFGGIMDCSAVASGLVAVMQTRENLIPTVVRLEGTNVDLGKDIVQRSGIPCQFTDSLNEAAQLAVALSKQG.

In terms of domain architecture, ATP-grasp spans 9–244 (KDLLVSYDIA…PSQENVRDVL (236 aa)). ATP contacts are provided by residues Lys46, 53 to 55 (GRG), Val102, and Glu107. Mg(2+) contacts are provided by Asn199 and Asp213. Substrate contacts are provided by residues Asn264 and 321 to 323 (GIM).

The protein belongs to the succinate/malate CoA ligase beta subunit family. In terms of assembly, heterotetramer of two alpha and two beta subunits. Requires Mg(2+) as cofactor.

It catalyses the reaction succinate + ATP + CoA = succinyl-CoA + ADP + phosphate. It carries out the reaction GTP + succinate + CoA = succinyl-CoA + GDP + phosphate. It participates in carbohydrate metabolism; tricarboxylic acid cycle; succinate from succinyl-CoA (ligase route): step 1/1. In terms of biological role, succinyl-CoA synthetase functions in the citric acid cycle (TCA), coupling the hydrolysis of succinyl-CoA to the synthesis of either ATP or GTP and thus represents the only step of substrate-level phosphorylation in the TCA. The beta subunit provides nucleotide specificity of the enzyme and binds the substrate succinate, while the binding sites for coenzyme A and phosphate are found in the alpha subunit. In Chlamydia caviae (strain ATCC VR-813 / DSM 19441 / 03DC25 / GPIC) (Chlamydophila caviae), this protein is Succinate--CoA ligase [ADP-forming] subunit beta.